We begin with the raw amino-acid sequence, 339 residues long: Cathepsin B (339 aa).

Positions 1 to 17 (MWQLWASLCCLLALADA) are cleaved as a signal peptide. A propeptide spans 18 to 79 (RSRPSFHPLS…QRVMFTEDLK (62 aa)) (activation peptide). Cystine bridges form between Cys93–Cys122, Cys105–Cys150, Cys141–Cys207, Cys142–Cys146, Cys179–Cys211, and Cys187–Cys198. The active site involves Cys108. N-linked (GlcNAc...) asparagine glycosylation occurs at Asn192. At Lys220 the chain carries N6-acetyllysine. Residues His278 and Asn298 contribute to the active site. The propeptide occupies 334–339 (QYWEKI).

The protein belongs to the peptidase C1 family. In terms of assembly, dimer of a heavy chain and a light chain cross-linked by a disulfide bond. Interacts with SRPX2. Directly interacts with SHKBP1.

It localises to the lysosome. The protein resides in the melanosome. It is found in the secreted. The protein localises to the extracellular space. Its subcellular location is the apical cell membrane. It catalyses the reaction Hydrolysis of proteins with broad specificity for peptide bonds. Preferentially cleaves -Arg-Arg-|-Xaa bonds in small molecule substrates (thus differing from cathepsin L). In addition to being an endopeptidase, shows peptidyl-dipeptidase activity, liberating C-terminal dipeptides.. In terms of biological role, thiol protease which is believed to participate in intracellular degradation and turnover of proteins. Cleaves matrix extracellular phosphoglycoprotein MEPE. Involved in the solubilization of cross-linked TG/thyroglobulin in the thyroid follicle lumen. Has also been implicated in tumor invasion and metastasis. The chain is Cathepsin B (CTSB) from Pongo abelii (Sumatran orangutan).